Reading from the N-terminus, the 370-residue chain is Capsular polysaccharide phosphotransferase (370 aa).

This sequence belongs to the stealth family.

Part of a capsular polysaccharide synthesis locus. This chain is Capsular polysaccharide phosphotransferase, found in Actinobacillus suis.